We begin with the raw amino-acid sequence, 600 residues long: DNA ligase (600 aa).

Aspartate 258 lines the ATP pocket. Lysine 260 acts as the N6-AMP-lysine intermediate in catalysis. The ATP site is built by arginine 265, arginine 280, glutamate 310, phenylalanine 350, arginine 427, and lysine 433.

It belongs to the ATP-dependent DNA ligase family. It depends on Mg(2+) as a cofactor.

It catalyses the reaction ATP + (deoxyribonucleotide)n-3'-hydroxyl + 5'-phospho-(deoxyribonucleotide)m = (deoxyribonucleotide)n+m + AMP + diphosphate.. With respect to regulation, inhibited by PCNA123 and PCNA323. Its function is as follows. DNA ligase that seals nicks in double-stranded DNA during DNA replication, DNA recombination and DNA repair. This chain is DNA ligase, found in Sulfurisphaera tokodaii (strain DSM 16993 / JCM 10545 / NBRC 100140 / 7) (Sulfolobus tokodaii).